Consider the following 250-residue polypeptide: tRNA-specific adenosine deaminase subunit TAD2 (250 aa).

The CMP/dCMP-type deaminase domain occupies 1-119 (MQHIKHMRTA…ERFGGNGTVL (119 aa)). His54 lines the Zn(2+) pocket. The active-site Proton donor is Glu56. 2 residues coordinate Zn(2+): Cys88 and Cys91.

This sequence belongs to the cytidine and deoxycytidylate deaminase family. ADAT2 subfamily. Heterodimer with TAD3. It depends on Zn(2+) as a cofactor.

The protein localises to the cytoplasm. It localises to the nucleus. The enzyme catalyses adenosine(34) in tRNA + H2O + H(+) = inosine(34) in tRNA + NH4(+). In terms of biological role, structural subunit of tRNA-specific adenosine deaminase, which deaminates adenosine-34 (the first, also called wobble position of the anticodon) to inosine in many tRNAs. Inosine-34 allows the decoding of 3 different nucleotides at the third position of mRNA codons, as inosine is able to pair with U, C, and A. This Saccharomyces cerevisiae (strain ATCC 204508 / S288c) (Baker's yeast) protein is tRNA-specific adenosine deaminase subunit TAD2 (TAD2).